The chain runs to 473 residues: MEHYEQARYAPAEGETNEPLLSENDQTTVSVDPSLPDDLTRDTVELPSLEEPELARHYVRLSQQNYGVDSGPYPLGSCTMKYNPRFTEDAAALPAAAVHPDRSETALQGTLAVMHDLQDYLGRIGGMDAVTLQPPAGAAGEFTGILIAEAYHEATDGGHRNEVIVPDAAHGTNFASAALGGYDVIELPSGDDGRVDLDALEAALGENTAALMLTNPNTLGLFERDIEPIAEMVHDAGGLLYYDGANLNALLGRARPGDMGFDIMHFNVHKTFATPHGGGGPGAGPVGVTDELAGFLPDPHVRQSAGGDYELYTPPRSIGKVHGFQGNWPVLVKAFAYIDRLGDSGLADASAKAVLNANYLADQLDYEIPLGPFHHEFVASAGDQDAADVAKRMLDYGVHPPTTKWPELVAEALMTEPTETESKRTLDDLADAFNAVAGDDDAALADAPSRTTARRIDQTAAARNPRLSWHDLD.

The interval 1 to 40 (MEHYEQARYAPAEGETNEPLLSENDQTTVSVDPSLPDDLT) is disordered. An N6-(pyridoxal phosphate)lysine modification is found at lysine 270.

The protein belongs to the GcvP family. C-terminal subunit subfamily. In terms of assembly, the glycine cleavage system is composed of four proteins: P, T, L and H. In this organism, the P 'protein' is a heterodimer of two subunits. Requires pyridoxal 5'-phosphate as cofactor.

The enzyme catalyses N(6)-[(R)-lipoyl]-L-lysyl-[glycine-cleavage complex H protein] + glycine + H(+) = N(6)-[(R)-S(8)-aminomethyldihydrolipoyl]-L-lysyl-[glycine-cleavage complex H protein] + CO2. The glycine cleavage system catalyzes the degradation of glycine. The P protein binds the alpha-amino group of glycine through its pyridoxal phosphate cofactor; CO(2) is released and the remaining methylamine moiety is then transferred to the lipoamide cofactor of the H protein. The polypeptide is Probable glycine dehydrogenase (decarboxylating) subunit 2 (Halobacterium salinarum (strain ATCC 700922 / JCM 11081 / NRC-1) (Halobacterium halobium)).